The following is an 804-amino-acid chain: Cas scaffolding protein family member 4 (804 aa).

The SH3 domain occupies 11 to 73; that stretch reads PKTLLARALY…PANRLQVLRE (63 aa). Ser200 and Ser297 each carry phosphoserine. 3 disordered regions span residues 369–395, 607–628, and 642–686; these read LERGREAPENSPWISGQTSFLSPDSDR, QRETESYQESSPFDRQPTTEHS, and QQSP…TERK. A compositionally biased stretch (polar residues) spans 380–390; sequence PWISGQTSFLS. The segment covering 649–664 has biased composition (basic and acidic residues); that stretch reads EKGKPTMEGKSNRNPD.

The protein belongs to the CAS family. In terms of assembly, interacts (via SH3 domain) with PTK2/FAK1 (via C-terminus). In terms of processing, phosphorylated on tyrosines by SRC.

The protein localises to the cytoplasm. It localises to the cytoskeleton. The protein resides in the cell junction. It is found in the focal adhesion. Docking protein that plays a role in tyrosine kinase-based signaling related to cell adhesion and cell spreading. Regulates PTK2/FAK1 activity, focal adhesion integrity, and cell spreading. This chain is Cas scaffolding protein family member 4, found in Mus musculus (Mouse).